A 243-amino-acid polypeptide reads, in one-letter code: Pyridoxine 5'-phosphate synthase (243 aa).

Asparagine 7 contacts 3-amino-2-oxopropyl phosphate. Position 9–10 (9–10 (DH)) interacts with 1-deoxy-D-xylulose 5-phosphate. Arginine 18 is a binding site for 3-amino-2-oxopropyl phosphate. Histidine 43 functions as the Proton acceptor in the catalytic mechanism. Residues arginine 45 and histidine 50 each coordinate 1-deoxy-D-xylulose 5-phosphate. Catalysis depends on glutamate 70, which acts as the Proton acceptor. Threonine 100 is a 1-deoxy-D-xylulose 5-phosphate binding site. Histidine 192 acts as the Proton donor in catalysis. Residues glycine 193 and 215 to 216 (GF) each bind 3-amino-2-oxopropyl phosphate.

This sequence belongs to the PNP synthase family. Homooctamer; tetramer of dimers.

Its subcellular location is the cytoplasm. The enzyme catalyses 3-amino-2-oxopropyl phosphate + 1-deoxy-D-xylulose 5-phosphate = pyridoxine 5'-phosphate + phosphate + 2 H2O + H(+). It functions in the pathway cofactor biosynthesis; pyridoxine 5'-phosphate biosynthesis; pyridoxine 5'-phosphate from D-erythrose 4-phosphate: step 5/5. Its function is as follows. Catalyzes the complicated ring closure reaction between the two acyclic compounds 1-deoxy-D-xylulose-5-phosphate (DXP) and 3-amino-2-oxopropyl phosphate (1-amino-acetone-3-phosphate or AAP) to form pyridoxine 5'-phosphate (PNP) and inorganic phosphate. In Salinibacter ruber (strain DSM 13855 / M31), this protein is Pyridoxine 5'-phosphate synthase.